A 279-amino-acid chain; its full sequence is Dehydrogenase/reductase SDR family member 4 (279 aa).

Residue 37-61 coordinates NADP(+); it reads LVTASTDGIGFAIARRLAEDGAHVV. Residue Lys93 is modified to N6-acetyllysine; alternate. Lys93 is modified (N6-succinyllysine; alternate). The residue at position 106 (Lys106) is an N6-acetyllysine. A substrate-binding site is contributed by Ser170. The active-site Proton acceptor is Tyr183. Lys187 is an NADP(+) binding site. The residue at position 217 (Lys217) is an N6-acetyllysine; alternate. Position 217 is an N6-succinyllysine; alternate (Lys217). Ser221 bears the Phosphoserine mark. Lys228 and Lys235 each carry N6-succinyllysine. The Peroxisomal targeting signal motif lies at 277-279; the sequence is SRL.

The protein belongs to the short-chain dehydrogenases/reductases (SDR) family. In terms of assembly, homotetramer.

It is found in the peroxisome. It catalyses the reaction a secondary alcohol + NADP(+) = a ketone + NADPH + H(+). The catalysed reaction is 3alpha-hydroxy-5beta-pregnan-20-one + NADP(+) = 5beta-pregnan-3,20-dione + NADPH + H(+). It carries out the reaction 5beta-dihydrotestosterone + NADPH + H(+) = 5beta-androstane-3alpha,17beta-diol + NADP(+). The enzyme catalyses all-trans-retinol + NADP(+) = all-trans-retinal + NADPH + H(+). It catalyses the reaction isatin + NADPH + H(+) = 3-hydroxyindolin-2-one + NADP(+). Its function is as follows. NADPH-dependent oxidoreductase which catalyzes the reduction of a variety of compounds bearing carbonyl groups including ketosteroids, alpha-dicarbonyl compounds, aldehydes, aromatic ketones and quinones. Reduces all-trans-retinal and 9-cis retinal. Reduces 3-ketosteroids and benzil into 3alpha-hydroxysteroids and S-benzoin, respectively, in contrast to the stereoselectivity of primates DHRS4s which produce 3beta-hydroxysteroids and R-benzoin. In the reverse reaction, catalyzes the NADP-dependent oxidation of 3alpha-hydroxysteroids and alcohol, but with much lower efficiency. Involved in the metabolism of 3alpha-hydroxysteroids, retinoid, isatin and xenobiotic carbonyl compounds. This is Dehydrogenase/reductase SDR family member 4 from Mus musculus (Mouse).